We begin with the raw amino-acid sequence, 152 residues long: Putative pre-16S rRNA nuclease (152 aa).

Belongs to the YqgF nuclease family.

It is found in the cytoplasm. Functionally, could be a nuclease involved in processing of the 5'-end of pre-16S rRNA. The sequence is that of Putative pre-16S rRNA nuclease from Synechocystis sp. (strain ATCC 27184 / PCC 6803 / Kazusa).